The chain runs to 326 residues: Probable cell division protein WhiA (326 aa).

Residues 275–308 constitute a DNA-binding region (H-T-H motif); that stretch reads SLEELGALADPPLTKDAIAGRIRRLLALADKRAR.

The protein belongs to the WhiA family.

Its function is as follows. Involved in cell division and chromosome segregation. The sequence is that of Probable cell division protein WhiA from Salinispora arenicola (strain CNS-205).